Here is a 124-residue protein sequence, read N- to C-terminus: Small ribosomal subunit protein eS6 (124 aa).

This sequence belongs to the eukaryotic ribosomal protein eS6 family.

The chain is Small ribosomal subunit protein eS6 from Methanococcus maripaludis (strain C7 / ATCC BAA-1331).